An 843-amino-acid chain; its full sequence is INO80 complex subunit D-B (843 aa).

The segment covering 159–175 has biased composition (basic and acidic residues); it reads TLNHKQKQQDHSVDTNH. Disordered stretches follow at residues 159 to 216, 221 to 240, 503 to 550, 695 to 726, and 791 to 843; these read TLNH…PTVR, FKTS…STDN, YHHH…LPQG, SLLH…HLTD, and LSTP…TAAP. Composition is skewed to polar residues over residues 176 to 187, 197 to 216, and 221 to 231; these read LRTSSLPSTLSH, RATQ…PTVR, and FKTSSSLQDTH. Residues 503 to 540 are compositionally biased toward basic residues; it reads YHHHQQIQRHRPLKKAKPPALSKKHKKKGKRGTQRRPQ. Positions 705–717 are enriched in pro residues; it reads PPSPPSPQPPLTP. Residues 796-821 are compositionally biased toward low complexity; sequence QPSSALSALPQSSQTRSTTTSPTSQT.

This sequence belongs to the INO80D family. As to quaternary structure, component of the chromatin-remodeling INO80 complex.

The protein localises to the nucleus. In terms of biological role, putative regulatory component of the chromatin remodeling INO80 complex which is involved in transcriptional regulation, DNA replication and probably DNA repair. This Danio rerio (Zebrafish) protein is INO80 complex subunit D-B (ino80db).